Reading from the N-terminus, the 1149-residue chain is Transforming acidic coiled-coil-containing protein 2 (1149 aa).

3 disordered regions span residues 1–73 (MGNE…GSNQ), 91–227 (SASP…ASSG), and 247–430 (PCSA…VPLT). Positions 13-35 (TSSVQSPRSLQPPGKSQSLQKQQ) are enriched in polar residues. Residues 91 to 106 (SASPSAARASPAPLAP) are compositionally biased toward low complexity. Serine 100 is subject to Phosphoserine. A compositionally biased stretch (pro residues) spans 155–180 (KAPPAPPPPPPEVTPEPEVIDPPAPE). Serine 265 bears the Phosphoserine mark. 2 stretches are compositionally biased toward polar residues: residues 267-284 (ESVPPSKSTLSRSLSLQA) and 300-317 (TLTTDACGTGSNSASSTL). The segment covering 318–334 (KRTKKTRPPSLKKKQAT) has biased composition (basic residues). Residue serine 354 is modified to Phosphoserine. Basic and acidic residues predominate over residues 358-368 (SEEHLAPETKT). Serine 419 is subject to Phosphoserine. Threonine 439 is modified (phosphothreonine). The disordered stretch occupies residues 463–617 (SEDKGSWESQ…PAKKKKTPLK (155 aa)). Basic residues predominate over residues 481-498 (KIGKKPVAKMPLRRPKMK). The region spanning 508–596 (PASPPRSPTE…SPASFEIPAS (89 aa)) is the SPAZ domain. Phosphoserine is present on residues serine 510 and serine 514. Threonine 516 carries the phosphothreonine modification. Positions 541 to 561 (NPFSSTSKMQESPKLSQQSYN) are enriched in polar residues. Phosphoserine is present on residues serine 552, serine 582, serine 585, serine 587, and serine 596. Over residues 575–590 (KASSKTPSSPSKSPAS) the composition is skewed to low complexity. 3 positions are modified to phosphothreonine: threonine 632, threonine 653, and threonine 657. Disordered regions lie at residues 636 to 665 (KKSPKRSPLSDPPSQDPTPAATPEAPSAIS) and 696 to 719 (DFPQPSDLSNFVNETKFNSPSEEL). Positions 652–665 (PTPAATPEAPSAIS) are enriched in low complexity. A compositionally biased stretch (polar residues) spans 701–716 (SDLSNFVNETKFNSPS). 2 positions are modified to phosphoserine: serine 714 and serine 736. At threonine 755 the chain carries Phosphothreonine. Residues 756–780 (PQESPVKSPPVRMSDSPTPCSGSSF) are disordered. Serine 759 and serine 771 each carry phosphoserine. The segment covering 770–780 (DSPTPCSGSSF) has biased composition (polar residues). Coiled-coil stretches lie at residues 877–905 (AQKLQEELEFAVMRIEALKLARQIALASR) and 948–1148 (DLDS…KMGK).

It belongs to the TACC family. As to quaternary structure, interacts with microtubules. Interacts with YEATS4, GCN5L2 and PCAF. Interacts with CCDC100/CEP120. Post-translationally, phosphorylated; which is required for localization in centrosome. Expressed in brain, kidney, lung, thymus and ovary. Not detectable in normal tissues at protein level.

The protein resides in the cytoplasm. It localises to the nucleus. It is found in the cytoskeleton. Its subcellular location is the microtubule organizing center. The protein localises to the centrosome. Its function is as follows. Plays a role in the microtubule-dependent coupling of the nucleus and the centrosome. Involved in the processes that regulate centrosome-mediated interkinetic nuclear migration (INM) of neural progenitors. May play a role in organizing centrosomal microtubules. The sequence is that of Transforming acidic coiled-coil-containing protein 2 (Tacc2) from Mus musculus (Mouse).